Consider the following 335-residue polypeptide: Cholinephosphotransferase 1 (335 aa).

The next 2 helical transmembrane spans lie at 53–73 (PNAI…PLIA) and 84–108 (FWAY…GKQA). N54 provides a ligand contact to CDP-choline. Mg(2+)-binding residues include D101 and D104. R109 serves as a coordination point for CDP-choline. Helical transmembrane passes span 116–140 (PLGE…SCIA), 151–169 (FFCC…WQTY), 181–197 (VTEV…VSAF), 213–238 (ELKF…RIIF), 267–276 (IGPGLLFLDQ), and 284–313 (EYVV…IAAH). D122 provides a ligand contact to Mg(2+). The active-site Proton acceptor is H123. Residue D126 participates in Mg(2+) binding.

It belongs to the CDP-alcohol phosphatidyltransferase class-I family. It depends on Mg(2+) as a cofactor. Mn(2+) serves as cofactor.

It is found in the golgi apparatus membrane. The catalysed reaction is CDP-choline + a 1,2-diacyl-sn-glycerol = a 1,2-diacyl-sn-glycero-3-phosphocholine + CMP + H(+). It catalyses the reaction 1-octadecanoyl-2-(5Z,8Z,11Z,14Z-eicosatetraenoyl)-sn-glycerol + CDP-choline = 1-octadecanoyl-2-(5Z,8Z,11Z,14Z-eicosatetraenoyl)-sn-glycero-3-phosphocholine + CMP + H(+). It carries out the reaction 1-hexadecanoyl-2-(9Z-octadecenoyl)-sn-glycerol + CDP-choline = 1-hexadecanoyl-2-(9Z-octadecenoyl)-sn-glycero-3-phosphocholine + CMP + H(+). The enzyme catalyses 1-hexadecanoyl-2-(4Z,7Z,10Z,13Z,16Z,19Z-docosahexaenoyl)-sn-glycerol + CDP-choline = 1-hexadecanoyl-2-(4Z,7Z,10Z,13Z,16Z,19Z-docosahexaenoyl)-sn-glycero-3-phosphocholine + CMP + H(+). The catalysed reaction is 1,2-dioctanoyl-sn-glycerol + CDP-choline = 1,2-dioctanoyl-sn-glycero-3-phosphocholine + CMP + H(+). Its pathway is phospholipid metabolism; phosphatidylcholine biosynthesis; phosphatidylcholine from phosphocholine: step 2/2. Functionally, catalyzes the final step of de novo phosphatidylcholine (PC) synthesis, i.e. the transfer of choline phosphate from CDP-choline to the free hydroxyl of a diacylglycerol (DAG), producing a PC. It thereby plays a central role in the formation and maintenance of vesicular membranes. The chain is Cholinephosphotransferase 1 (CHPT1) from Gallus gallus (Chicken).